The chain runs to 678 residues: Mitogen-activated protein kinase kinase kinase 7 (678 aa).

Residues 19–271 (ITLREKVGHG…YIVGVMHEIV (253 aa)) form the Protein kinase domain. ATP contacts are provided by residues 25–33 (VGHGSYGVV) and lysine 46. Aspartate 140 functions as the Proton acceptor in the catalytic mechanism. 4 disordered regions span residues 296–322 (DGTV…QLTP), 339–365 (TTSS…LDNN), 431–455 (DLSP…LTVT), and 616–647 (QLAA…HFLQ). Low complexity-rich tracts occupy residues 313 to 322 (LSPSSTQLTP) and 339 to 352 (TTSS…STSS). Polar residues predominate over residues 353–364 (DITPTNSGQLDN).

The protein belongs to the protein kinase superfamily. STE Ser/Thr protein kinase family. MAP kinase kinase kinase subfamily. The cofactor is Mg(2+).

It catalyses the reaction L-seryl-[protein] + ATP = O-phospho-L-seryl-[protein] + ADP + H(+). The enzyme catalyses L-threonyl-[protein] + ATP = O-phospho-L-threonyl-[protein] + ADP + H(+). In terms of biological role, component of a protein kinase signal transduction cascade. Mediator of TGF-beta signal transduction. Responsible for activation of the JNK MAPK pathway (basket, bsk and hemipterous, hep) in response to LPS. Component of the NF-kappa-B pathway; relish-mediated JNK inhibition involves proteasomal degradation of Tak1; certain targets of Relish that are induced during immune responses may facilitate destruction of Tak1 and switch off the JNK cascade. Participates in diverse roles such as control of cell shape and regulation of apoptosis. The sequence is that of Mitogen-activated protein kinase kinase kinase 7 (Tak1) from Drosophila melanogaster (Fruit fly).